The primary structure comprises 283 residues: 4-diphosphocytidyl-2-C-methyl-D-erythritol kinase (283 aa).

The active site involves K10. 95 to 105 (PVAAGLGGGSS) provides a ligand contact to ATP. The active site involves D137.

Belongs to the GHMP kinase family. IspE subfamily.

It catalyses the reaction 4-CDP-2-C-methyl-D-erythritol + ATP = 4-CDP-2-C-methyl-D-erythritol 2-phosphate + ADP + H(+). It participates in isoprenoid biosynthesis; isopentenyl diphosphate biosynthesis via DXP pathway; isopentenyl diphosphate from 1-deoxy-D-xylulose 5-phosphate: step 3/6. Its function is as follows. Catalyzes the phosphorylation of the position 2 hydroxy group of 4-diphosphocytidyl-2C-methyl-D-erythritol. This Limosilactobacillus fermentum (strain NBRC 3956 / LMG 18251) (Lactobacillus fermentum) protein is 4-diphosphocytidyl-2-C-methyl-D-erythritol kinase.